A 183-amino-acid chain; its full sequence is uncharacterized protein (183 aa).

Belongs to the isochorismatase family.

This is an uncharacterized protein from Bacillus subtilis (strain 168).